Reading from the N-terminus, the 314-residue chain is Homoserine O-succinyltransferase (314 aa).

Cys-142 acts as the Acyl-thioester intermediate in catalysis. Residues Lys-163 and Ser-192 each contribute to the substrate site. The Proton acceptor role is filled by His-235. Glu-237 is a catalytic residue. Arg-249 is a binding site for substrate.

It belongs to the MetA family.

The protein resides in the cytoplasm. It carries out the reaction L-homoserine + succinyl-CoA = O-succinyl-L-homoserine + CoA. It participates in amino-acid biosynthesis; L-methionine biosynthesis via de novo pathway; O-succinyl-L-homoserine from L-homoserine: step 1/1. Transfers a succinyl group from succinyl-CoA to L-homoserine, forming succinyl-L-homoserine. In Shewanella pealeana (strain ATCC 700345 / ANG-SQ1), this protein is Homoserine O-succinyltransferase.